A 142-amino-acid polypeptide reads, in one-letter code: Ribosome-binding factor A (142 aa).

Residues 119–142 (EAKQKQHGVETDAEQGETKDEGDK) form a disordered region.

The protein belongs to the RbfA family. Monomer. Binds 30S ribosomal subunits, but not 50S ribosomal subunits or 70S ribosomes.

The protein localises to the cytoplasm. Functionally, one of several proteins that assist in the late maturation steps of the functional core of the 30S ribosomal subunit. Associates with free 30S ribosomal subunits (but not with 30S subunits that are part of 70S ribosomes or polysomes). Required for efficient processing of 16S rRNA. May interact with the 5'-terminal helix region of 16S rRNA. The protein is Ribosome-binding factor A of Shewanella halifaxensis (strain HAW-EB4).